The primary structure comprises 289 residues: SAGA-associated factor 29kDa (289 aa).

Residues 9–36 are a coiled coil; it reads AQQIQDRLKDIQQNIHNVDEERRRAENS. Positions 137-278 constitute an SGF29 C-terminal domain; the sequence is GNYVAKVGDN…VIAYRPTKKG (142 aa). Histone H3K4me3 N-terminus binding stretches follow at residues 179–181 and 225–228; these read DID and QTTC. The interval 249 to 251 is histone H3K4me3 binding; the sequence is FED.

The protein belongs to the SGF29 family. Component of the Spt-Ada-Gcn5 acetyltransferase (SAGA) complex consisting of wda/Taf5L, Saf6, Taf9, Taf10b, Taf12, Ada1, Spt3, Spt7, Spt20, Sf3b3, Sf3b5, Nipped-A/Tra1, a histone acetyltransferase (HAT) module made up of Gcn5, Ada2b (Isoform B), Ada3 and Sgf29, and a deubiquitinase (DUB) module made up of not/nonstop, Sgf11, Atxn7 and e(y)2. Component of the Chiffon histone acetyltransferase (CHAT) complex consisting of Ada3, Sgf29, Gcn5, chif/chiffon and Ada2b (Isoform A).

It localises to the nucleus. In terms of biological role, component of both the SAGA and CHAT histone acetyltransferase complexes, which both predominantly acetylate histone H3. This chain is SAGA-associated factor 29kDa, found in Drosophila melanogaster (Fruit fly).